The sequence spans 140 residues: PDZ domain-containing protein 11 (140 aa).

The 83-residue stretch at 47 to 129 folds into the PDZ domain; sequence TITLKKPPGA…ISMRVRFFPY (83 aa).

In terms of assembly, interacts with ATP2B1, ATP2B2, ATP2B3, ATP2B4 and ATP7A. Interacts with PLEKHA7 (via WW domains) at zonula adherens; this interaction is essential for the interaction between PLEKHA7 and the ADAM10-binding protein TSPAN33. Interacts with SLC5A6. Widely expressed (at protein level).

It is found in the secreted. It localises to the cytoplasm. The protein localises to the cell junction. The protein resides in the adherens junction. Its subcellular location is the cell membrane. Functionally, mediates docking of ADAM10 to zonula adherens by interacting with PLEKHA7 which is required for PLEKHA7 to interact with the ADAM10-binding protein TSPAN33. This is PDZ domain-containing protein 11 (PDZD11) from Homo sapiens (Human).